The following is a 748-amino-acid chain: Catalase-peroxidase (748 aa).

The tryptophyl-tyrosyl-methioninium (Trp-Tyr) (with M-262) cross-link spans 91–236 (WHSAGTYRVG…LAAVQMGLIY (146 aa)). The Proton acceptor role is filled by histidine 92. The tract at residues 201–223 (AQPVADKAGHGKEHGRTDGGRNL) is disordered. Over residues 207-221 (KAGHGKEHGRTDGGR) the composition is skewed to basic and acidic residues. A cross-link (tryptophyl-tyrosyl-methioninium (Tyr-Met) (with W-91)) is located at residues 236 to 262 (YVNPEGPDGNPDPQASAHDIRETFARM). Histidine 277 is a binding site for heme b.

This sequence belongs to the peroxidase family. Peroxidase/catalase subfamily. In terms of assembly, homodimer or homotetramer. Requires heme b as cofactor. Post-translationally, formation of the three residue Trp-Tyr-Met cross-link is important for the catalase, but not the peroxidase activity of the enzyme.

The enzyme catalyses H2O2 + AH2 = A + 2 H2O. It catalyses the reaction 2 H2O2 = O2 + 2 H2O. Functionally, bifunctional enzyme with both catalase and broad-spectrum peroxidase activity. The sequence is that of Catalase-peroxidase from Bordetella avium (strain 197N).